The sequence spans 273 residues: Imidazole glycerol phosphate synthase subunit HisF (273 aa).

Catalysis depends on residues Asp11 and Asp134.

Belongs to the HisA/HisF family. In terms of assembly, heterodimer of HisH and HisF.

The protein localises to the cytoplasm. The catalysed reaction is 5-[(5-phospho-1-deoxy-D-ribulos-1-ylimino)methylamino]-1-(5-phospho-beta-D-ribosyl)imidazole-4-carboxamide + L-glutamine = D-erythro-1-(imidazol-4-yl)glycerol 3-phosphate + 5-amino-1-(5-phospho-beta-D-ribosyl)imidazole-4-carboxamide + L-glutamate + H(+). Its pathway is amino-acid biosynthesis; L-histidine biosynthesis; L-histidine from 5-phospho-alpha-D-ribose 1-diphosphate: step 5/9. Its function is as follows. IGPS catalyzes the conversion of PRFAR and glutamine to IGP, AICAR and glutamate. The HisF subunit catalyzes the cyclization activity that produces IGP and AICAR from PRFAR using the ammonia provided by the HisH subunit. This Methanococcoides burtonii (strain DSM 6242 / NBRC 107633 / OCM 468 / ACE-M) protein is Imidazole glycerol phosphate synthase subunit HisF.